Consider the following 86-residue polypeptide: Small ribosomal subunit protein bS20 (86 aa).

Positions 1-11 are enriched in polar residues; the sequence is MANIKSQIKRN. A disordered region spans residues 1-20; that stretch reads MANIKSQIKRNLTNEKRHQA.

Belongs to the bacterial ribosomal protein bS20 family.

In terms of biological role, binds directly to 16S ribosomal RNA. This is Small ribosomal subunit protein bS20 from Acholeplasma laidlawii (strain PG-8A).